Reading from the N-terminus, the 62-residue chain is Cecropin-A (62 aa).

Positions 1-20 (MNLVKILFCVFACLVFTVTA) are cleaved as a signal peptide. Positions 21-24 (VPEP) are cleaved as a propeptide — removed by a dipeptidylpeptidase. Thr-60 bears the Threonine amide mark.

This sequence belongs to the cecropin family.

The protein localises to the secreted. Has antibacterial activity. The polypeptide is Cecropin-A (Trichoplusia ni (Cabbage looper)).